The chain runs to 494 residues: Cheilanthifoline synthase (494 aa).

The chain crosses the membrane as a helical span at residues 4–24 (TIWLIISTVIIVLGIAKFLLG). Position 437 (C437) interacts with heme.

The protein belongs to the cytochrome P450 family. Heme serves as cofactor. Expressed in roots and at lower levels in stems, leaves and plantlets.

The protein resides in the endoplasmic reticulum membrane. The catalysed reaction is (S)-scoulerine + reduced [NADPH--hemoprotein reductase] + O2 = (S)-cheilanthifoline + oxidized [NADPH--hemoprotein reductase] + 2 H2O + H(+). In terms of biological role, methylenedioxy bridge-forming cytochrome P450 involved in the biosynthesis of isoquinoline alkaloids. Converts (S)-scoulerine into (S)-cheilanthifoline, a precursor of sanguinarine. Catalyzes an oxidative reaction that does not incorporate oxygen into the product. The protein is Cheilanthifoline synthase of Argemone mexicana (Mexican prickly poppy).